Consider the following 305-residue polypeptide: UDP-3-O-acyl-N-acetylglucosamine deacetylase (305 aa).

Residues histidine 78, histidine 237, and aspartate 241 each coordinate Zn(2+). Histidine 264 serves as the catalytic Proton donor.

It belongs to the LpxC family. Zn(2+) is required as a cofactor.

It carries out the reaction a UDP-3-O-[(3R)-3-hydroxyacyl]-N-acetyl-alpha-D-glucosamine + H2O = a UDP-3-O-[(3R)-3-hydroxyacyl]-alpha-D-glucosamine + acetate. It participates in glycolipid biosynthesis; lipid IV(A) biosynthesis; lipid IV(A) from (3R)-3-hydroxytetradecanoyl-[acyl-carrier-protein] and UDP-N-acetyl-alpha-D-glucosamine: step 2/6. In terms of biological role, catalyzes the hydrolysis of UDP-3-O-myristoyl-N-acetylglucosamine to form UDP-3-O-myristoylglucosamine and acetate, the committed step in lipid A biosynthesis. In Burkholderia pseudomallei (strain 668), this protein is UDP-3-O-acyl-N-acetylglucosamine deacetylase.